A 570-amino-acid polypeptide reads, in one-letter code: MSEKHPGPLVVEGKLSDAERMKLESNYLRGTIAEDLNDGLTGGFKGDNFLLIRFHGMYQQDDRDIRAERAEQKLEPRHAMLLRCRLPGGVITTTQWQAIDKFAADNTIYGSIRLTNRQTFQFHGILKKNVKPVHQMLHSVGLDALATANDMNRNVLCTSNPYESQLHAEAYEWAKKISEHLLPRTRAYAEIWLDQEKVATTDEEPILGQTYLPRKFKTTVVIPPQNDIDLHANDMNFVAIAENGKLVGFNLLVGGGLSIEHGNKKTYARTASEFGYLPLEHTLAVAEAVVTTQRDWGNRTDRKNAKTKYTLERVGLETFKAEVERRAGIKFEPIRPYEFTGRGDRIGWVKGIDNNWHLTLFIENGRILDYPGRPLKTGLLEIAKIHQGEFRITANQNLIIASVPESQKAKIETLARDHGLMNAVSAQRENSMACVSFPTCPLAMAEAERFLPSFTDKVEAILEKHGIPDEHIVMRVTGCPNGCGRAMLAEIGLVGKAPGRYNLHLGGNRIGTRIPLMYQENITEPDILASLDELIGRWAKEREAGEGFGDFTVRAGIIRPVLDPARDFWE.

Positions 434, 440, 479, and 483 each coordinate [4Fe-4S] cluster. Cys-483 contributes to the siroheme binding site.

It belongs to the nitrite and sulfite reductase 4Fe-4S domain family. Alpha(8)-beta(8). The alpha component is a flavoprotein, the beta component is a hemoprotein. Siroheme serves as cofactor. The cofactor is [4Fe-4S] cluster.

The enzyme catalyses hydrogen sulfide + 3 NADP(+) + 3 H2O = sulfite + 3 NADPH + 4 H(+). Its pathway is sulfur metabolism; hydrogen sulfide biosynthesis; hydrogen sulfide from sulfite (NADPH route): step 1/1. In terms of biological role, component of the sulfite reductase complex that catalyzes the 6-electron reduction of sulfite to sulfide. This is one of several activities required for the biosynthesis of L-cysteine from sulfate. In Salmonella gallinarum (strain 287/91 / NCTC 13346), this protein is Sulfite reductase [NADPH] hemoprotein beta-component.